Consider the following 154-residue polypeptide: 3-hydroxyacyl-[acyl-carrier-protein] dehydratase FabZ (154 aa).

Residue His57 is part of the active site.

It belongs to the thioester dehydratase family. FabZ subfamily.

The protein resides in the cytoplasm. The enzyme catalyses a (3R)-hydroxyacyl-[ACP] = a (2E)-enoyl-[ACP] + H2O. In terms of biological role, involved in unsaturated fatty acids biosynthesis. Catalyzes the dehydration of short chain beta-hydroxyacyl-ACPs and long chain saturated and unsaturated beta-hydroxyacyl-ACPs. This Sinorhizobium medicae (strain WSM419) (Ensifer medicae) protein is 3-hydroxyacyl-[acyl-carrier-protein] dehydratase FabZ.